We begin with the raw amino-acid sequence, 418 residues long: Maltoporin (418 aa).

Positions Met-1–Ala-26 are cleaved as a signal peptide.

The protein belongs to the porin LamB (TC 1.B.3) family. As to quaternary structure, homotrimer formed of three 18-stranded antiparallel beta-barrels, containing three independent channels.

It is found in the cell outer membrane. The enzyme catalyses beta-maltose(in) = beta-maltose(out). In terms of biological role, involved in the transport of maltose and maltodextrins. The chain is Maltoporin from Photobacterium profundum (strain SS9).